The following is a 61-amino-acid chain: Small ribosomal subunit protein uS14B (61 aa).

Positions 24, 27, 40, and 43 each coordinate Zn(2+).

The protein belongs to the universal ribosomal protein uS14 family. Zinc-binding uS14 subfamily. In terms of assembly, part of the 30S ribosomal subunit. Contacts proteins S3 and S10. Requires Zn(2+) as cofactor.

Functionally, binds 16S rRNA, required for the assembly of 30S particles and may also be responsible for determining the conformation of the 16S rRNA at the A site. The polypeptide is Small ribosomal subunit protein uS14B (Mycobacterium ulcerans (strain Agy99)).